The chain runs to 473 residues: Thermostable beta-glucosidase B (473 aa).

Residue Glu196 is the Proton donor of the active site. The Nucleophile role is filled by Glu378.

The protein belongs to the glycosyl hydrolase 1 family.

It localises to the cytoplasm. It catalyses the reaction Hydrolysis of terminal, non-reducing beta-D-glucosyl residues with release of beta-D-glucose.. This is Thermostable beta-glucosidase B (bglB) from Thermobispora bispora (Microbispora bispora).